A 234-amino-acid chain; its full sequence is Large ribosomal subunit protein uL3 (234 aa).

Residues 137 to 156 are disordered; the sequence is AGHGVERKHRSPGSVGGCAT.

The protein belongs to the universal ribosomal protein uL3 family. In terms of assembly, part of the 50S ribosomal subunit. Forms a cluster with proteins L14 and L19.

Functionally, one of the primary rRNA binding proteins, it binds directly near the 3'-end of the 23S rRNA, where it nucleates assembly of the 50S subunit. This Frankia alni (strain DSM 45986 / CECT 9034 / ACN14a) protein is Large ribosomal subunit protein uL3.